Reading from the N-terminus, the 37-residue chain is MNRLLQRQLFLENLLVGVNSTFHQMQKHSINTCCRSL.

The protein belongs to the rotavirus A NSP6 family. Interacts with NSP2 and NSP5.

Its subcellular location is the host cytoplasm. It is found in the host mitochondrion. In Rotavirus A (strain RVA/Human/United States/P/1974/G3P1A[8]) (RV-A), this protein is Non-structural protein 6.